The sequence spans 88 residues: MLAFCYSLPNAGDVIKGRVYEKDYALYIYLFDYPHSEAILAESVKMHMDRYVEYRDKLVGKTVKVKVIRVDYTKGYIDVNYKRMCRHQ.

Positions L8–K82 constitute an S1 motif domain. Binding to host EIF2AK2/PKR regions lie at residues S43–E53 and K74–V79.

It belongs to the orthopoxvirus OPG041 family. Interacts with host EIF2AK2/PKR kinase.

Viral mimic of eIF-2-alpha that acts as a pseudosubstrate for EIF2AK2/PKR kinase. Inhibits therefore eIF-2-alpha phosphorylation by host EIF2AK2/PKR kinase and prevents protein synthesis shutoff. Determinant of host species specificity. In Homo sapiens (Human), this protein is Protein K3 (OPG041).